We begin with the raw amino-acid sequence, 178 residues long: Inorganic pyrophosphatase (178 aa).

Lysine 30, arginine 44, and tyrosine 56 together coordinate substrate. Positions 66, 71, and 103 each coordinate Mg(2+). Tyrosine 140 provides a ligand contact to substrate.

This sequence belongs to the PPase family. Homohexamer. Requires Mg(2+) as cofactor.

The protein resides in the cytoplasm. It carries out the reaction diphosphate + H2O = 2 phosphate + H(+). Functionally, catalyzes the hydrolysis of inorganic pyrophosphate (PPi) forming two phosphate ions. This chain is Inorganic pyrophosphatase, found in Pyrococcus horikoshii (strain ATCC 700860 / DSM 12428 / JCM 9974 / NBRC 100139 / OT-3).